The chain runs to 735 residues: Diacylglycerol kinase alpha (735 aa).

EF-hand domains follow at residues 110 to 145 (RPEDKLEFTFKLYDTDRNGILDSSEVDKIILQMMRV) and 155 to 190 (ELRPILQEMMKEIDYDGSGSVSQAEWVRAGATTVPL). The Ca(2+) site is built by Asp-123, Asp-125, Asn-127, Glu-134, Asp-168, Asp-170, Ser-172, Ser-174, and Glu-179. Phorbol-ester/DAG-type zinc fingers lie at residues 205–253 (QHMW…ALPC) and 269–319 (SHVW…GHEC). Residues 372–506 (PNTHPLLVFV…MDRWSVEVIP (135 aa)) form the DAGKc domain. Lys-484 carries the N6-acetyllysine modification.

The protein belongs to the eukaryotic diacylglycerol kinase family. As to quaternary structure, monomer. Expressed in lymphocytes.

It is found in the cytoplasm. It localises to the cytosol. The catalysed reaction is a 1,2-diacyl-sn-glycerol + ATP = a 1,2-diacyl-sn-glycero-3-phosphate + ADP + H(+). It catalyses the reaction a 1-O-alkyl-sn-glycerol + ATP = a 1-O-alkyl-sn-glycero-3-phosphate + ADP + H(+). The enzyme catalyses 1-O-alkyl-2-acyl-sn-glycerol + ATP = 1-O-alkyl-2-acyl-sn-glycero-3-phosphate + ADP + H(+). It carries out the reaction 1,2-dihexadecanoyl-sn-glycerol + ATP = 1,2-dihexadecanoyl-sn-glycero-3-phosphate + ADP + H(+). The catalysed reaction is 1-hexadecanoyl-2-(9Z-octadecenoyl)-sn-glycerol + ATP = 1-hexadecanoyl-2-(9Z-octadecenoyl)-sn-glycero-3-phosphate + ADP + H(+). It catalyses the reaction 2-(9Z-octadecenoyl)-glycerol + ATP = 2-(9Z-octadecenoyl)-sn-glycero-3-phosphate + ADP + H(+). The enzyme catalyses 1,2-di-(9Z-octadecenoyl)-sn-glycerol + ATP = 1,2-di-(9Z-octadecenoyl)-sn-glycero-3-phosphate + ADP + H(+). It carries out the reaction 1-octadecanoyl-2-(5Z,8Z,11Z,14Z-eicosatetraenoyl)-sn-glycerol + ATP = 1-octadecanoyl-2-(5Z,8Z,11Z,14Z-eicosatetraenoyl)-sn-glycero-3-phosphate + ADP + H(+). The catalysed reaction is 1,2-didecanoyl-sn-glycerol + ATP = 1,2-didecanoyl-sn-glycero-3-phosphate + ADP + H(+). It catalyses the reaction 1-O-hexadecyl-2-acetyl-sn-glycerol + ATP = 1-O-hexadecyl-2-acetyl-sn-glycero-3-phosphate + ADP + H(+). The enzyme catalyses 1-O-hexadecyl-2-(5Z,8Z,11Z,14Z-eicosatetraenoyl)-sn-glycerol + ATP = 1-O-hexadecyl-2-(5Z,8Z,11Z,14Z-eicosatetraenoyl)-sn-glycero-3-phosphate + ADP + H(+). It carries out the reaction 1-O-hexadecyl-2-(9Z-octadecenoyl)-sn-glycerol + ATP = 1-O-hexadecyl-2-(9Z-octadecenoyl)-sn-glycero-3-phosphate + ADP + H(+). The catalysed reaction is 1-O-hexadecyl-sn-glycerol + ATP = 1-O-hexadecyl-sn-glycero-3-phosphate + ADP + H(+). It participates in lipid metabolism; glycerolipid metabolism. Stimulated by calcium and phosphatidylserine. Its function is as follows. Diacylglycerol kinase that converts diacylglycerol/DAG into phosphatidic acid/phosphatidate/PA and regulates the respective levels of these two bioactive lipids. Thereby, acts as a central switch between the signaling pathways activated by these second messengers with different cellular targets and opposite effects in numerous biological processes. Also plays an important role in the biosynthesis of complex lipids. Can also phosphorylate 1-alkyl-2-acylglycerol in vitro as efficiently as diacylglycerol provided it contains an arachidonoyl group. Also involved in the production of alkyl-lysophosphatidic acid, another bioactive lipid, through the phosphorylation of 1-alkyl-2-acetyl glycerol. The polypeptide is Diacylglycerol kinase alpha (DGKA) (Homo sapiens (Human)).